A 496-amino-acid polypeptide reads, in one-letter code: Probable malate:quinone oxidoreductase (496 aa).

This sequence belongs to the MQO family. FAD is required as a cofactor.

It catalyses the reaction (S)-malate + a quinone = a quinol + oxaloacetate. Its pathway is carbohydrate metabolism; tricarboxylic acid cycle; oxaloacetate from (S)-malate (quinone route): step 1/1. This Flavobacterium psychrophilum (strain ATCC 49511 / DSM 21280 / CIP 103535 / JIP02/86) protein is Probable malate:quinone oxidoreductase.